The sequence spans 454 residues: Histidine--tRNA ligase (454 aa).

It belongs to the class-II aminoacyl-tRNA synthetase family. In terms of assembly, homodimer.

The protein resides in the cytoplasm. It catalyses the reaction tRNA(His) + L-histidine + ATP = L-histidyl-tRNA(His) + AMP + diphosphate + H(+). This Porphyromonas gingivalis (strain ATCC BAA-308 / W83) protein is Histidine--tRNA ligase.